Here is a 314-residue protein sequence, read N- to C-terminus: Signal peptidase I (314 aa).

A helical transmembrane segment spans residues 5–25 (LTIFLLISTLVTGIFWSFYCI). Residues 26 to 63 (KSFKNYLINKKIINNNNFHQEKIEKSKNKTYFLKSLAS) are Cytoplasmic-facing. Residues 64 to 84 (FFPIFLAIFIIRSFIYEPFQI) form a helical membrane-spanning segment. Topologically, residues 85-314 (PSGSMMPTLL…IRINRIGSIH (230 aa)) are extracellular. Catalysis depends on residues Ser88 and Lys143.

The protein belongs to the peptidase S26 family.

The protein localises to the cell membrane. The catalysed reaction is Cleavage of hydrophobic, N-terminal signal or leader sequences from secreted and periplasmic proteins.. This is Signal peptidase I (lepB) from Buchnera aphidicola subsp. Acyrthosiphon pisum (strain APS) (Acyrthosiphon pisum symbiotic bacterium).